A 149-amino-acid chain; its full sequence is Large ribosomal subunit protein uL15C (149 aa).

Residues 21-40 (RIGKHRKQRGGRGNAGGQHH) are disordered.

It belongs to the universal ribosomal protein uL15 family. In terms of assembly, component of the large ribosomal subunit.

Its subcellular location is the cytoplasm. It is found in the cytosol. The protein localises to the endoplasmic reticulum. Functionally, component of the large ribosomal subunit. The ribosome is a large ribonucleoprotein complex responsible for the synthesis of proteins in the cell. The chain is Large ribosomal subunit protein uL15C (rpl27a-3) from Entamoeba histolytica (strain ATCC 30459 / HM-1:IMSS / ABRM).